Reading from the N-terminus, the 178-residue chain is Cytidylate kinase 2 (178 aa).

Residue 7–15 participates in ATP binding; sequence GKSGCGNTT.

The protein belongs to the cytidylate kinase family. Type 2 subfamily.

The protein resides in the cytoplasm. The catalysed reaction is CMP + ATP = CDP + ADP. The enzyme catalyses dCMP + ATP = dCDP + ADP. The sequence is that of Cytidylate kinase 2 from Borreliella afzelii (strain PKo) (Borrelia afzelii).